We begin with the raw amino-acid sequence, 569 residues long: Anti-Muellerian hormone type-2 receptor (569 aa).

The N-terminal stretch at 1 to 17 is a signal peptide; it reads MLGTLGLWALLPAAVQA. Residues 18–148 are Extracellular-facing; it reads PPNRRTCVFF…AAPGESPWMA (131 aa). Intrachain disulfides connect Cys-55-Cys-79 and Cys-92-Cys-109. Asn-66 carries an N-linked (GlcNAc...) asparagine glycan. Asn-119 carries an N-linked (GlcNAc...) asparagine glycan. A helical membrane pass occupies residues 149–169; sequence LALLGLVLLLLLLLGGIVVAL. The Cytoplasmic portion of the chain corresponds to 170-569; sequence LQRKAYRVQS…PGAACASSDV (400 aa). The Protein kinase domain maps to 201–511; sequence LCFSQVIREG…RLVALVHPQE (311 aa). ATP contacts are provided by residues 207–215 and Lys-228; that span reads IREGGHAAV. Asp-331 acts as the Proton acceptor in catalysis. The tract at residues 512 to 535 is disordered; that stretch reads AQPCPEGRPHSHPEDWPPAPAPAP.

This sequence belongs to the protein kinase superfamily. TKL Ser/Thr protein kinase family. TGFB receptor subfamily. As to quaternary structure, interacts with type I receptor ACVR1. Requires Mg(2+) as cofactor. The cofactor is Mn(2+).

Its subcellular location is the membrane. It catalyses the reaction L-threonyl-[receptor-protein] + ATP = O-phospho-L-threonyl-[receptor-protein] + ADP + H(+). It carries out the reaction L-seryl-[receptor-protein] + ATP = O-phospho-L-seryl-[receptor-protein] + ADP + H(+). In terms of biological role, on ligand binding, forms a receptor complex consisting of two type II and two type I transmembrane serine/threonine kinases. Type II receptors phosphorylate and activate type I receptors which autophosphorylate, then bind and activate SMAD transcriptional regulators. Receptor for anti-Muellerian hormone. The protein is Anti-Muellerian hormone type-2 receptor (AMHR2) of Oryctolagus cuniculus (Rabbit).